Here is a 92-residue protein sequence, read N- to C-terminus: Putative membrane protein insertion efficiency factor (92 aa).

This sequence belongs to the UPF0161 family.

Its subcellular location is the cell membrane. In terms of biological role, could be involved in insertion of integral membrane proteins into the membrane. This is Putative membrane protein insertion efficiency factor from Tropheryma whipplei (strain TW08/27) (Whipple's bacillus).